The sequence spans 418 residues: CinA-like protein (418 aa).

Belongs to the CinA family.

The protein is CinA-like protein of Flavobacterium psychrophilum (strain ATCC 49511 / DSM 21280 / CIP 103535 / JIP02/86).